The sequence spans 1392 residues: DNA-directed RNA polymerase subunit beta' (1392 aa).

C70, C72, C85, and C88 together coordinate Zn(2+). Mg(2+)-binding residues include D460, D462, and D464. 4 residues coordinate Zn(2+): C810, C884, C891, and C894.

The protein belongs to the RNA polymerase beta' chain family. In terms of assembly, the RNAP catalytic core consists of 2 alpha, 1 beta, 1 beta' and 1 omega subunit. When a sigma factor is associated with the core the holoenzyme is formed, which can initiate transcription. The cofactor is Mg(2+). It depends on Zn(2+) as a cofactor.

It carries out the reaction RNA(n) + a ribonucleoside 5'-triphosphate = RNA(n+1) + diphosphate. Its function is as follows. DNA-dependent RNA polymerase catalyzes the transcription of DNA into RNA using the four ribonucleoside triphosphates as substrates. The polypeptide is DNA-directed RNA polymerase subunit beta' (Geobacter metallireducens (strain ATCC 53774 / DSM 7210 / GS-15)).